A 176-amino-acid chain; its full sequence is ATP synthase subunit d, mitochondrial (176 aa).

As to quaternary structure, F-type ATP synthases have 2 components, the catalytic core F(1) and the membrane-embedded component F(0), linked together by a central stalk and a peripheral stalk. The central stalk, also called rotor shaft, is often seen as part of F(1). The peripheral stalk is seen as part of F(0). F(0) contains the membrane channel next to the rotor. F-type ATP synthases form dimers but each monomer functions independently in ATP generation. The dimer consists of 17 different polypeptides: ATP1 (subunit alpha, 3 molecules per monomer, part of F(1)), ATP2 (subunit beta, 3 copies per monomer, part of F(1)), ATP3 (subunit gamma, part of the central stalk), ATP4 (subunit b, part of the peripheral stalk), ATP5/OSCP (subunit 5/OSCP, part of the peripheral stalk), ATP6 (subunit a, part of the peripheral stalk), ATP7 (subunit d, part of the peripheral stalk), ATP8 (subunit 8, part of the peripheral stalk), OLI1 (subunit c, part of the rotor, 10 molecules per monomer), ATP14 (subunit h, part of the peripheral stalk), ATP15 (subunit epsilon, part of the central stalk), ATP16 (subunit delta, part of the central stalk), ATP17 (subunit f, part of the peripheral stalk), ATP18 (subunit i/j, part of the peripheral stalk), ATP19 (subunit k, dimer-specific, at interface between monomers), ATP20 (subunit g, at interface between monomers), TIM11 (subunit e, at interface between monomers).

Its subcellular location is the mitochondrion inner membrane. Its function is as follows. Mitochondrial membrane ATP synthase (F(1)F(0) ATP synthase or Complex V) produces ATP from ADP in the presence of a proton gradient across the membrane which is generated by electron transport complexes of the respiratory chain. F-type ATP synthases consist of two structural domains, F(1) - containing the extramembraneous catalytic core, and F(0) - containing the membrane proton channel, linked together by a central stalk and a peripheral stalk. During catalysis, ATP synthesis in the catalytic domain of F(1) is coupled via a rotary mechanism of the central stalk subunits to proton translocation. Part of the complex F(0) domain and the peripheral stalk, which acts as a stator to hold the catalytic alpha/ATP1(3)beta/ATP2(3) subcomplex and subunit a/ATP6 static relative to the rotary elements. This Yarrowia lipolytica (strain CLIB 122 / E 150) (Yeast) protein is ATP synthase subunit d, mitochondrial.